We begin with the raw amino-acid sequence, 418 residues long: Pestheic acid cluster transcriptional regulator 1 (418 aa).

The tract at residues Gly-244–Pro-272 is disordered. Residues Thr-245–Lys-260 show a composition bias toward low complexity.

The protein localises to the nucleus. Transcription factor that, with ptaR2 and ptaR3, coregulates the expression of the gene cluster that mediates the biosynthesis of pestheic acid, a diphenyl ether which is a biosynthetic precursor of the unique chloropupukeananes. This is Pestheic acid cluster transcriptional regulator 1 from Pestalotiopsis fici (strain W106-1 / CGMCC3.15140).